The sequence spans 262 residues: Orotidine 5'-phosphate decarboxylase (262 aa).

Substrate is bound by residues Asp-35, 57-59 (KTH), 89-98 (DRKFADIGNT), Tyr-215, and Arg-233. Lys-91 serves as the catalytic Proton donor.

It belongs to the OMP decarboxylase family.

The catalysed reaction is orotidine 5'-phosphate + H(+) = UMP + CO2. It participates in pyrimidine metabolism; UMP biosynthesis via de novo pathway; UMP from orotate: step 2/2. The polypeptide is Orotidine 5'-phosphate decarboxylase (URA3) (Pichia kudriavzevii (Yeast)).